An 85-amino-acid polypeptide reads, in one-letter code: Ice-structuring protein 4 (85 aa).

An N-terminal signal peptide occupies residues 1–21 (MRITEANPDPDAKAVPAAAAP).

The protein belongs to the type-I AFP family.

The protein resides in the secreted. Functionally, contributes to protect fish blood from freezing at subzero sea water temperatures. Lowers the blood freezing point. Binds to nascent ice crystals and prevents further growth. The protein is Ice-structuring protein 4 of Pseudopleuronectes americanus (Winter flounder).